The following is a 293-amino-acid chain: Elongation factor Ts (293 aa).

The tract at residues 80-83 (TDFV) is involved in Mg(2+) ion dislocation from EF-Tu.

This sequence belongs to the EF-Ts family.

The protein localises to the cytoplasm. In terms of biological role, associates with the EF-Tu.GDP complex and induces the exchange of GDP to GTP. It remains bound to the aminoacyl-tRNA.EF-Tu.GTP complex up to the GTP hydrolysis stage on the ribosome. The protein is Elongation factor Ts of Paraburkholderia phytofirmans (strain DSM 17436 / LMG 22146 / PsJN) (Burkholderia phytofirmans).